The sequence spans 556 residues: Dihydroxy-acid dehydratase (556 aa).

D78 provides a ligand contact to Mg(2+). C119 serves as a coordination point for [2Fe-2S] cluster. Mg(2+) contacts are provided by D120 and K121. K121 carries the N6-carboxylysine modification. C191 serves as a coordination point for [2Fe-2S] cluster. Residue E442 coordinates Mg(2+). S468 acts as the Proton acceptor in catalysis.

This sequence belongs to the IlvD/Edd family. As to quaternary structure, homodimer. Requires [2Fe-2S] cluster as cofactor. Mg(2+) is required as a cofactor.

It carries out the reaction (2R)-2,3-dihydroxy-3-methylbutanoate = 3-methyl-2-oxobutanoate + H2O. The catalysed reaction is (2R,3R)-2,3-dihydroxy-3-methylpentanoate = (S)-3-methyl-2-oxopentanoate + H2O. It functions in the pathway amino-acid biosynthesis; L-isoleucine biosynthesis; L-isoleucine from 2-oxobutanoate: step 3/4. The protein operates within amino-acid biosynthesis; L-valine biosynthesis; L-valine from pyruvate: step 3/4. Its function is as follows. Functions in the biosynthesis of branched-chain amino acids. Catalyzes the dehydration of (2R,3R)-2,3-dihydroxy-3-methylpentanoate (2,3-dihydroxy-3-methylvalerate) into 2-oxo-3-methylpentanoate (2-oxo-3-methylvalerate) and of (2R)-2,3-dihydroxy-3-methylbutanoate (2,3-dihydroxyisovalerate) into 2-oxo-3-methylbutanoate (2-oxoisovalerate), the penultimate precursor to L-isoleucine and L-valine, respectively. This chain is Dihydroxy-acid dehydratase, found in Caldanaerobacter subterraneus subsp. tengcongensis (strain DSM 15242 / JCM 11007 / NBRC 100824 / MB4) (Thermoanaerobacter tengcongensis).